Reading from the N-terminus, the 158-residue chain is Putative cTAGE family member 3 (158 aa).

Residues 26–96 (QLQESQKQLL…AAVLEEDITD (71 aa)) are a coiled coil.

Belongs to the cTAGE family. Expressed in normal tissues including colon, mammary gland, ovary, placenta, stomach and testis, as well as several fetal tissues.

Tumor-associated antigen. This Homo sapiens (Human) protein is Putative cTAGE family member 3 (CTAGE3P).